The following is a 550-amino-acid chain: Arginine--tRNA ligase (550 aa).

The short motif at 130-140 (ANPTGPIHLGG) is the 'HIGH' region element.

Belongs to the class-I aminoacyl-tRNA synthetase family. Monomer.

The protein localises to the cytoplasm. The enzyme catalyses tRNA(Arg) + L-arginine + ATP = L-arginyl-tRNA(Arg) + AMP + diphosphate. The protein is Arginine--tRNA ligase of Rhodococcus erythropolis (strain PR4 / NBRC 100887).